A 409-amino-acid chain; its full sequence is Triose phosphate/phosphate translocator, chloroplastic (409 aa).

The transit peptide at 1–85 directs the protein to the chloroplast; the sequence is MSALGTLSGG…ARRHTLQPPA (85 aa). Topologically, residues 86-104 are chloroplast intermembrane; it reads AAAESAGEAKSVGFLEKYP. Residues 105-125 traverse the membrane as a helical segment; it reads ALVTGFFFFMWYFLNVIFNIL. The Lumenal portion of the chain corresponds to 126 to 137; the sequence is NKKIYNYFPYPY. Residues 138-158 form a helical membrane-spanning segment; that stretch reads FVSLIHLVVGVVYCLISWSVG. The Chloroplast intermembrane portion of the chain corresponds to 159-215; the sequence is LPKRAPINGTLLKLLFPVALCHGIGHITSNVSFAAVAVSFAHTIKALEPFFSAAATQ. A helical membrane pass occupies residues 216–236; sequence FILGQQVPFSLWLSLAPVVIG. Residues 237–280 lie on the Lumenal side of the membrane; sequence VSMASLTELSFNWTGFINAMISNISFTYRSIYSKKAMTDMDSTN. The chain crosses the membrane as a helical span at residues 281–300; sequence VYAYISIIALIVCIPPALIF. Over 301-378 the chain is Chloroplast intermembrane; that stretch reads EGPKLMQHGF…IVFGNKISTQ (78 aa). A helical transmembrane segment spans residues 379-399; that stretch reads TGIGTSIAIAGVAMYSYIKAK. Topologically, residues 400–409 are lumenal; sequence IEEEKRKKSA.

It belongs to the TPT transporter family. TPT (TC 2.A.7.9) subfamily. As to quaternary structure, homodimer.

It is found in the plastid. It localises to the chloroplast membrane. Functionally, mediates the export of fixed carbons from the chloroplasts into the cytosol in the form of triose phosphates. In addition, it can also bind and transport phosphoenolpyruvate, thereby increasing the photosynthetic efficiency of C4-plants. This Zea mays (Maize) protein is Triose phosphate/phosphate translocator, chloroplastic (TPT).